The primary structure comprises 1592 residues: ABC transporter ATP-binding protein/permease VMR1 (1592 aa).

Over 1-33 (MGTDPLIIRNNGSFWEVDDFTRLGRTQLLSYYL) the chain is Vacuolar. N-linked (GlcNAc...) asparagine glycosylation occurs at N11. Residues 34-54 (PLAIIASIGIFALCRSGLSRY) form a helical membrane-spanning segment. At 55–74 (VRSAECDLVNEYLFGAQEER) the chain is on the cytoplasmic side. Residues 75–95 (KEDNSIERLLRNSNTQANYVN) traverse the membrane as a helical segment. The Vacuolar segment spans residues 96-100 (VKKQG). A helical membrane pass occupies residues 101–121 (RILKLRHFDITTIDVKQIDAK). Residues 122–131 (NHGGLTFSRP) lie on the Cytoplasmic side of the membrane. A helical transmembrane segment spans residues 132-152 (STSDHLRKSSEIVLMSLQIIG). Residues 153–170 (LSFLRVTKINIELTNRDV) lie on the Vacuolar side of the membrane. The chain crosses the membrane as a helical span at residues 171 to 191 (TTLLLFWLILLSLSILRVYKR). The Cytoplasmic portion of the chain corresponds to 192 to 329 (STNLWAICFT…NKHINNLTLA (138 aa)). A helical membrane pass occupies residues 330-350 (LFESFKTYLLIGMLWVLVNSI). In terms of domain architecture, ABC transmembrane type-1 1 spans 338–632 (LLIGMLWVLV…LSNMLSFINQ (295 aa)). Topologically, residues 351–379 (VNLLPTILMKRFLEIVDNPNRSSSCMNLA) are vacuolar. Residue N370 is glycosylated (N-linked (GlcNAc...) asparagine). A helical membrane pass occupies residues 380–400 (WLYIIGMFICRLTLAICNSQG). At 401–465 (QFVSDKICLR…SFKVSELANY (65 aa)) the chain is on the cytoplasmic side. The helical transmembrane segment at 466–486 (LYVTVQAVIMIIVVVGLLFNF) threads the bilayer. At 487-489 (LGV) the chain is on the vacuolar side. The chain crosses the membrane as a helical span at residues 490 to 510 (SAFAGISIILVMFPLNFLLAN). At 511 to 572 (LLGKFQKQTL…SLLKKSLVWS (62 aa)) the chain is on the cytoplasmic side. Residues 573-593 (VTSFLWFVTPTLVTGVTFAIC) traverse the membrane as a helical segment. At 594–614 (TFVQHEDLNAPLAFTTLSLFT) the chain is on the vacuolar side. A helical transmembrane segment spans residues 615 to 635 (LLKTPLDQLSNMLSFINQSKV). The Cytoplasmic segment spans residues 636–989 (SLKRISDFLR…ALTALFALYI (354 aa)). The ABC transporter 1 domain maps to 664-908 (IEFKNATLTW…GLFKEKYVQL (245 aa)). 702-709 (GSTGSGKS) is an ATP binding site. The region spanning 981-1282 (LTALFALYIT…LVRLYSTFEM (302 aa)) is the ABC transmembrane type-1 2 domain. The helical transmembrane segment at 990-1010 (TAQILFISQSWWIRHWVNDTN) threads the bilayer. Topologically, residues 1011–1051 (VRINAPGFAMDTLPLKGMTDSSKNKHNAFYYLTVYFLIGII) are vacuolar. Residues 1052-1072 (QAMLGGFKTMMTFLSGMRASR) form a helical membrane-spanning segment. Residues 1073–1115 (KIFNNLLDLVLHAQIRFFDVTPVGRIMNRFSKDIEGVDQELIP) lie on the Cytoplasmic side of the membrane. The helical transmembrane segment at 1116–1136 (YLEVTIFCLIQCASIIFLITV) threads the bilayer. Position 1137 (I1137) is a topological domain, vacuolar. A helical transmembrane segment spans residues 1138–1158 (TPRFLTVAVIVFVLYFFVGKW). At 1159–1229 (YLTASRELKR…VTVKWFSFRV (71 aa)) the chain is on the cytoplasmic side. The helical transmembrane segment at 1230 to 1250 (DMIGAFIVLASGSFILLNIAN) threads the bilayer. Residues 1251-1252 (ID) lie on the Vacuolar side of the membrane. The helical transmembrane segment at 1253 to 1273 (SGLAGISLTYAILFTDGALWL) threads the bilayer. The Cytoplasmic portion of the chain corresponds to 1274 to 1592 (VRLYSTFEMN…IAKQSSKMMK (319 aa)). In terms of domain architecture, ABC transporter 2 spans 1323–1572 (IEIENLSLRY…ERGIFYSMCR (250 aa)). 1357–1364 (GRTGAGKS) is an ATP binding site.

It belongs to the ABC transporter superfamily. As to quaternary structure, ABC transporter which may be involved in multidrug resistance.

It is found in the vacuole membrane. This is ABC transporter ATP-binding protein/permease VMR1 (VMR1) from Saccharomyces cerevisiae (strain ATCC 204508 / S288c) (Baker's yeast).